The sequence spans 894 residues: Cell wall-associated protease (894 aa).

A signal peptide spans 1–31 (MKRRKFSSVVAAVLIFALIFSLFSPGTKAAA). Positions 422 to 729 (QWPLKNNGEN…YGRLNVMKAV (308 aa)) constitute a Peptidase S8 domain. Active-site charge relay system residues include Asp-462, His-497, and Ser-650.

Belongs to the peptidase S8 family. In terms of processing, proteolytically cleaved to yield CWBP23 and CWBP52.

Its subcellular location is the secreted. The protein localises to the cell wall. With respect to regulation, inhibited by PMSF. In terms of biological role, CWBP52 is a serine-type protease that could be involved in proteoglycan peptide bridges. This Bacillus subtilis (strain 168) protein is Cell wall-associated protease (wprA).